The sequence spans 516 residues: Flavonoid 3',5'-hydroxylase (516 aa).

Cys-453 provides a ligand contact to heme.

This sequence belongs to the cytochrome P450 family. Heme serves as cofactor.

It catalyses the reaction a 3',5'-unsubstituted flavanone + 2 reduced [NADPH--hemoprotein reductase] + 2 O2 = a 3',5'-dihydroxyflavanone + 2 oxidized [NADPH--hemoprotein reductase] + 2 H2O + 2 H(+). It functions in the pathway pigment biosynthesis; anthocyanin biosynthesis. Catalyzes the 3'5'-hydroxylation of naringenin and eriodictyol to form 5,7,3,'4',5'-pentahydroxyflavanone and 3',5'-hydroxylation of dihydrokaempferol and dihydroquercetin to form dihydromyricetin. This Gentiana triflora (Clustered gentian) protein is Flavonoid 3',5'-hydroxylase (CYP75A4).